Consider the following 685-residue polypeptide: E3 ubiquitin-protein ligase RNF6 (685 aa).

Composition is skewed to basic and acidic residues over residues 1–10, 17–29, and 88–107; these read MNQSRSRSDG, PQDH…ERRW, and DLRD…SSHE. Disordered regions lie at residues 1 to 29, 81 to 107, 121 to 142, 168 to 273, 286 to 345, and 499 to 576; these read MNQS…ERRW, EQLA…SSHE, GNAT…RTNP, DYTD…REGQ, RSNV…RRRG, and EADS…NPNN. 3 stretches are compositionally biased toward polar residues: residues 199–213, 250–264, and 286–297; these read SQTS…SNIP, ASRT…QSGG, and RSNVTVRNTNQR. A compositionally biased stretch (low complexity) spans 303–313; the sequence is LRSTSNSRSRS. Composition is skewed to polar residues over residues 314-325 and 519-528; these read PIQRQSGTVYHN and ELSNLGTDNN. The RING-type zinc finger occupies 632 to 673; sequence CSVCISDYVTGNKLRQLPCMHEFHIHCIDRWLSENCTCPICR.

Belongs to the RNF12 family. Weakly expressed in peripheral blood, spleen, prostate, testis and ovary. According to a report, it is preferentially expressed in testis and ovary and hardly detected in other tissues.

The protein resides in the nucleus. The protein localises to the cytoplasm. Its subcellular location is the cell projection. It is found in the axon. It localises to the PML body. It carries out the reaction S-ubiquitinyl-[E2 ubiquitin-conjugating enzyme]-L-cysteine + [acceptor protein]-L-lysine = [E2 ubiquitin-conjugating enzyme]-L-cysteine + N(6)-ubiquitinyl-[acceptor protein]-L-lysine.. It participates in protein modification; protein ubiquitination. In terms of biological role, E3 ubiquitin-protein ligase mediating 'Lys-48'-linked polyubiquitination of LIMK1 and its subsequent targeting to the proteasome for degradation. Negatively regulates axonal outgrowth through regulation of the LIMK1 turnover. Mediates 'Lys-6' and 'Lys-27'-linked polyubiquitination of AR/androgen receptor thereby modulating its transcriptional activity. May also bind DNA and function as a transcriptional regulator. Mediates polyubiquitination of QKI in macrophages, leading to its degradation. This chain is E3 ubiquitin-protein ligase RNF6, found in Homo sapiens (Human).